The primary structure comprises 62 residues: Flavodoxin (62 aa).

The 59-residue stretch at 4–62 (IGIFFGTDTGKTRKIAKMIHKQLGELADAPVNINRTTLDDFMAYPVLLLGTPTLGDGQL) folds into the Flavodoxin-like domain.

The protein belongs to the flavodoxin family. FMN serves as cofactor.

Functionally, low-potential electron donor to a number of redox enzymes. NifF is the electron donor to nitrogenase. The polypeptide is Flavodoxin (nifF) (Klebsiella oxytoca).